Consider the following 402-residue polypeptide: NADH-quinone oxidoreductase subunit D 2 (402 aa).

This sequence belongs to the complex I 49 kDa subunit family. NDH-1 is composed of 14 different subunits. Subunits NuoB, C, D, E, F, and G constitute the peripheral sector of the complex.

The protein resides in the cell inner membrane. The catalysed reaction is a quinone + NADH + 5 H(+)(in) = a quinol + NAD(+) + 4 H(+)(out). Functionally, NDH-1 shuttles electrons from NADH, via FMN and iron-sulfur (Fe-S) centers, to quinones in the respiratory chain. The immediate electron acceptor for the enzyme in this species is believed to be ubiquinone. Couples the redox reaction to proton translocation (for every two electrons transferred, four hydrogen ions are translocated across the cytoplasmic membrane), and thus conserves the redox energy in a proton gradient. In Nitrobacter hamburgensis (strain DSM 10229 / NCIMB 13809 / X14), this protein is NADH-quinone oxidoreductase subunit D 2.